Consider the following 90-residue polypeptide: Probable Fe(2+)-trafficking protein (90 aa).

Belongs to the Fe(2+)-trafficking protein family.

Could be a mediator in iron transactions between iron acquisition and iron-requiring processes, such as synthesis and/or repair of Fe-S clusters in biosynthetic enzymes. The sequence is that of Probable Fe(2+)-trafficking protein from Nitrosomonas eutropha (strain DSM 101675 / C91 / Nm57).